The chain runs to 256 residues: Thiazole synthase (256 aa).

The active-site Schiff-base intermediate with DXP is the K98. Residues G159, 185 to 186 (AG), and 207 to 208 (NT) contribute to the 1-deoxy-D-xylulose 5-phosphate site.

It belongs to the ThiG family. As to quaternary structure, homotetramer. Forms heterodimers with either ThiH or ThiS.

It localises to the cytoplasm. The enzyme catalyses [ThiS sulfur-carrier protein]-C-terminal-Gly-aminoethanethioate + 2-iminoacetate + 1-deoxy-D-xylulose 5-phosphate = [ThiS sulfur-carrier protein]-C-terminal Gly-Gly + 2-[(2R,5Z)-2-carboxy-4-methylthiazol-5(2H)-ylidene]ethyl phosphate + 2 H2O + H(+). The protein operates within cofactor biosynthesis; thiamine diphosphate biosynthesis. Functionally, catalyzes the rearrangement of 1-deoxy-D-xylulose 5-phosphate (DXP) to produce the thiazole phosphate moiety of thiamine. Sulfur is provided by the thiocarboxylate moiety of the carrier protein ThiS. In vitro, sulfur can be provided by H(2)S. In Aliivibrio fischeri (strain MJ11) (Vibrio fischeri), this protein is Thiazole synthase.